The sequence spans 732 residues: Integrator complex subunit 13 (732 aa).

Over residues 564 to 648 (PPEEEERKKR…DETPHMEKSK (85 aa)) the composition is skewed to basic and acidic residues. A disordered region spans residues 564–650 (PPEEEERKKR…TPHMEKSKGP (87 aa)). The Nuclear localization signal (NLS) signature appears at 572 to 582 (KRGRKREDRED). Lys611 participates in a covalent cross-link: Glycyl lysine isopeptide (Lys-Gly) (interchain with G-Cter in SUMO2). Ser623, Ser626, and Ser678 each carry phosphoserine. Residues 649–694 (GPVSLLSLWSNRINTANSRKHQEFAGRLNSVNNRAELYQHLKEENG) form a cleavage module binding motif (CMBM) region.

It belongs to the Integrator subunit 13 family. As to quaternary structure, component of the Integrator complex, composed of core subunits INTS1, INTS2, INTS3, INTS4, INTS5, INTS6, INTS7, INTS8, INTS9/RC74, INTS10, INTS11/CPSF3L, INTS12, INTS13, INTS14 and INTS15. The core complex associates with protein phosphatase 2A subunits PPP2CA and PPP2R1A, to form the Integrator-PP2A (INTAC) complex. INTS13 is part of the tail subcomplex, composed of INTS10, INTS13, INTS14 and INTS15. Interacts with transcription factors ZNF609 and ZNF655. Interacts with PAFAH1B1; this interaction may be required for proper recruitment of dynein complexes to the nuclear envelope at prophase.

Its subcellular location is the nucleus. It is found in the cytoplasm. Component of the integrator complex, a multiprotein complex that terminates RNA polymerase II (Pol II) transcription in the promoter-proximal region of genes. The integrator complex provides a quality checkpoint during transcription elongation by driving premature transcription termination of transcripts that are unfavorably configured for transcriptional elongation: the complex terminates transcription by (1) catalyzing dephosphorylation of the C-terminal domain (CTD) of Pol II subunit POLR2A/RPB1 and SUPT5H/SPT5, (2) degrading the exiting nascent RNA transcript via endonuclease activity and (3) promoting the release of Pol II from bound DNA. The integrator complex is also involved in terminating the synthesis of non-coding Pol II transcripts, such as enhancer RNAs (eRNAs), small nuclear RNAs (snRNAs), telomerase RNAs and long non-coding RNAs (lncRNAs). Within the integrator complex, INTS13 is part of the integrator tail module and acts as a platform for the recruitment of transcription factors at promoters. At prophase, mediates recruitment of cytoplasmic dynein to the nuclear envelope, a step important for proper centrosome-nucleus coupling. At G2/M phase, may be required for proper spindle formation and execution of cytokinesis. The sequence is that of Integrator complex subunit 13 from Mus musculus (Mouse).